The primary structure comprises 1020 residues: RNA-binding protein 44 (1020 aa).

2 disordered regions span residues 1–23 (MQAT…GHLQ) and 50–70 (DGEG…NSSV). Over residues 58–70 (TDERTNVKENSSV) the composition is skewed to basic and acidic residues. Phosphoserine is present on residues Ser-249, Ser-371, Ser-374, Ser-516, Ser-683, and Ser-690. Residues 796 to 870 (FLIHVGGLCP…KSVNVRLVKI (75 aa)) form the RRM domain.

Homodimer. Interacts with TEX14.

Its subcellular location is the cytoplasm. Component of intercellular bridges during meiosis. Intercellular bridges are evolutionarily conserved structures that connect differentiating germ cells. Not required for fertility. This chain is RNA-binding protein 44 (Rbm44), found in Rattus norvegicus (Rat).